A 232-amino-acid polypeptide reads, in one-letter code: Phosphatidylserine decarboxylase proenzyme (232 aa).

Residue Ser-190 is the Schiff-base intermediate with substrate; via pyruvic acid of the active site. The residue at position 190 (Ser-190) is a Pyruvic acid (Ser); by autocatalysis.

This sequence belongs to the phosphatidylserine decarboxylase family. PSD-A subfamily. Heterodimer of a large membrane-associated beta subunit and a small pyruvoyl-containing alpha subunit. Requires pyruvate as cofactor. Is synthesized initially as an inactive proenzyme. Formation of the active enzyme involves a self-maturation process in which the active site pyruvoyl group is generated from an internal serine residue via an autocatalytic post-translational modification. Two non-identical subunits are generated from the proenzyme in this reaction, and the pyruvate is formed at the N-terminus of the alpha chain, which is derived from the carboxyl end of the proenzyme. The post-translation cleavage follows an unusual pathway, termed non-hydrolytic serinolysis, in which the side chain hydroxyl group of the serine supplies its oxygen atom to form the C-terminus of the beta chain, while the remainder of the serine residue undergoes an oxidative deamination to produce ammonia and the pyruvoyl prosthetic group on the alpha chain.

The protein resides in the cell membrane. The enzyme catalyses a 1,2-diacyl-sn-glycero-3-phospho-L-serine + H(+) = a 1,2-diacyl-sn-glycero-3-phosphoethanolamine + CO2. The protein operates within phospholipid metabolism; phosphatidylethanolamine biosynthesis; phosphatidylethanolamine from CDP-diacylglycerol: step 2/2. Catalyzes the formation of phosphatidylethanolamine (PtdEtn) from phosphatidylserine (PtdSer). The chain is Phosphatidylserine decarboxylase proenzyme from Beijerinckia indica subsp. indica (strain ATCC 9039 / DSM 1715 / NCIMB 8712).